Reading from the N-terminus, the 1664-residue chain is Peroxisome proliferator-activated receptor gamma coactivator-related protein 1 (1664 aa).

7 disordered regions span residues 1–44 (MAAR…GTLG), 167–255 (LLTL…VASF), 436–555 (PVVP…EGPL), 681–701 (VDPVLVKSRPTDPRRGAVSSA), 735–793 (IESG…ADIP), 818–873 (CLVP…PTPP), and 1045–1068 (HGAPQTEPTKVEVKPVPASPHPKH). Positions 12–22 (APPPSGGPGPD) are enriched in pro residues. Positions 23–32 (PGGGARGSGW) are enriched in gly residues. Positions 201–224 (SLPDPSWDFSPPSFLETSSPKLPS) are enriched in low complexity. Ser-237 carries the phosphoserine modification. A necessary for interaction with CREB1 and NRF1 and for transcriptional coactivation region spans residues 433 to 467 (VVEPVVPKEPQNPPANAAPGSQRARKGRKKKSKEQ). A compositionally biased stretch (basic residues) spans 455–464 (RARKGRKKKS). Residues 482–499 (SSRGQSTVGTEVTSQVDN) are compositionally biased toward polar residues. Residues 522–531 (RAWARAWAAA) show a composition bias toward low complexity. Residues 533-549 (ENSSPKNLERSAGQSSP) are compositionally biased toward polar residues. 2 positions are modified to phosphoserine: Ser-536 and Ser-548. Pro residues predominate over residues 823-836 (GPSPASPSPEPPVS). Residues 862 to 873 (VQSVSPAVPTPP) are compositionally biased toward low complexity. At Ser-1076 the chain carries Phosphoserine. Disordered regions lie at residues 1093–1130 (EEPASERLKPETQETRPREKPPLPATKAVPTPRQSTVP), 1182–1209 (SEAKKECPPPAPADSLAVGNSGGVDIPQ), and 1334–1528 (VLSL…DHYQ). Positions 1096-1113 (ASERLKPETQETRPREKP) are enriched in basic and acidic residues. Residues 1365-1383 (PSAPCLAPSSLLSPEASPC) show a composition bias toward low complexity. Residues 1379-1450 (EASPCRNDMN…SSSSSSSSSS (72 aa)) form a necessary for interaction with CREB1 and NRF1 region. Residues 1400–1409 (RSMRCYRKAC) show a composition bias toward basic residues. Residues Ser-1411 and Ser-1413 each carry the phosphoserine modification. Composition is skewed to low complexity over residues 1427–1459 (SRSVSSGSNRTSEASSSSSSSSSSSRSRSRSLS) and 1468–1500 (SSCSSSGRSRRCSSSSSSSSSSSSSSSSSSSSR). Residues 1501 to 1519 (SRSRSPSPRRRSDRRRRYS) show a composition bias toward basic residues. Residues 1543 to 1619 (RVVFIGKIPG…QPFDLCFGGR (77 aa)) enclose the RRM domain.

In terms of assembly, interacts with CREB1 and NRF1. As to expression, strongly expressed in heart and skeletal muscle, moderately in lung, placenta, intestine, liver, kidney, spleen, thymus, colon and brain. Also expressed in several oncocytic thyroid tumors.

It localises to the nucleus. In terms of biological role, acts as a coactivator during transcriptional activation of nuclear genes related to mitochondrial biogenesis and cell growth. Involved in the transcription coactivation of CREB and NRF1 target genes. This is Peroxisome proliferator-activated receptor gamma coactivator-related protein 1 (PPRC1) from Homo sapiens (Human).